A 418-amino-acid polypeptide reads, in one-letter code: Serine hydroxymethyltransferase (418 aa).

Residues Leu117 and 121–123 contribute to the (6S)-5,6,7,8-tetrahydrofolate site; that span reads GHL. Lys225 carries the post-translational modification N6-(pyridoxal phosphate)lysine.

The protein belongs to the SHMT family. In terms of assembly, homodimer. Requires pyridoxal 5'-phosphate as cofactor.

It is found in the cytoplasm. The catalysed reaction is (6R)-5,10-methylene-5,6,7,8-tetrahydrofolate + glycine + H2O = (6S)-5,6,7,8-tetrahydrofolate + L-serine. It participates in one-carbon metabolism; tetrahydrofolate interconversion. It functions in the pathway amino-acid biosynthesis; glycine biosynthesis; glycine from L-serine: step 1/1. Functionally, catalyzes the reversible interconversion of serine and glycine with tetrahydrofolate (THF) serving as the one-carbon carrier. This reaction serves as the major source of one-carbon groups required for the biosynthesis of purines, thymidylate, methionine, and other important biomolecules. Also exhibits THF-independent aldolase activity toward beta-hydroxyamino acids, producing glycine and aldehydes, via a retro-aldol mechanism. In Mycoplasma mobile (strain ATCC 43663 / 163K / NCTC 11711) (Mesomycoplasma mobile), this protein is Serine hydroxymethyltransferase.